The primary structure comprises 150 residues: Transcriptional repressor NrdR (150 aa).

Residues 3-33 (CPYCTGESAVIDTRELDNGETIRRRRRCKHC) fold into a zinc finger. Residues 48 to 138 (VMVVKKNGDR…VYRSFSDLGK (91 aa)) form the ATP-cone domain.

The protein belongs to the NrdR family. Requires Zn(2+) as cofactor.

Functionally, negatively regulates transcription of bacterial ribonucleotide reductase nrd genes and operons by binding to NrdR-boxes. This Herpetosiphon aurantiacus (strain ATCC 23779 / DSM 785 / 114-95) protein is Transcriptional repressor NrdR.